Reading from the N-terminus, the 413-residue chain is Alpha-1-antitrypsin 1-1 (413 aa).

The first 24 residues, 1–24 (MTPSISWGLLLLAGLCCLVPSFLA), serve as a signal peptide directing secretion. N-linked (GlcNAc...) asparagine glycans are attached at residues Asn-64, Asn-101, and Asn-265. Residues 368–387 (AVTVLQMVPMSMPPILRFDH) form an RCL region.

The protein belongs to the serpin family.

Its subcellular location is the secreted. Its function is as follows. Inhibitor of serine proteases. Its primary target is elastase, but it also has a moderate affinity for plasmin and thrombin. The protein is Alpha-1-antitrypsin 1-1 (Serpina1a) of Mus musculus (Mouse).